The primary structure comprises 196 residues: Holliday junction branch migration complex subunit RuvA (196 aa).

The domain I stretch occupies residues 1–63 (MINKIYGKII…EDEIKLFGFL (63 aa)). Positions 64-138 (NVSEREVFEE…GKLVKADELT (75 aa)) are domain II. A region of interest (flexible linker) is located at residue T138. The interval 139–196 (SSVFKFKDLEQSIVNMGFDRKLVVAAIKEIMLIDEFLMLREVEQEQFLFRETLKRLSG) is domain III.

The protein belongs to the RuvA family. In terms of assembly, homotetramer. Forms an RuvA(8)-RuvB(12)-Holliday junction (HJ) complex. HJ DNA is sandwiched between 2 RuvA tetramers; dsDNA enters through RuvA and exits via RuvB. An RuvB hexamer assembles on each DNA strand where it exits the tetramer. Each RuvB hexamer is contacted by two RuvA subunits (via domain III) on 2 adjacent RuvB subunits; this complex drives branch migration. In the full resolvosome a probable DNA-RuvA(4)-RuvB(12)-RuvC(2) complex forms which resolves the HJ.

The protein localises to the cytoplasm. In terms of biological role, the RuvA-RuvB-RuvC complex processes Holliday junction (HJ) DNA during genetic recombination and DNA repair, while the RuvA-RuvB complex plays an important role in the rescue of blocked DNA replication forks via replication fork reversal (RFR). RuvA specifically binds to HJ cruciform DNA, conferring on it an open structure. The RuvB hexamer acts as an ATP-dependent pump, pulling dsDNA into and through the RuvAB complex. HJ branch migration allows RuvC to scan DNA until it finds its consensus sequence, where it cleaves and resolves the cruciform DNA. The chain is Holliday junction branch migration complex subunit RuvA from Borrelia hermsii (strain HS1 / DAH).